The following is a 420-amino-acid chain: Gamma-glutamyl phosphate reductase (420 aa).

Belongs to the gamma-glutamyl phosphate reductase family.

The protein resides in the cytoplasm. The catalysed reaction is L-glutamate 5-semialdehyde + phosphate + NADP(+) = L-glutamyl 5-phosphate + NADPH + H(+). It functions in the pathway amino-acid biosynthesis; L-proline biosynthesis; L-glutamate 5-semialdehyde from L-glutamate: step 2/2. In terms of biological role, catalyzes the NADPH-dependent reduction of L-glutamate 5-phosphate into L-glutamate 5-semialdehyde and phosphate. The product spontaneously undergoes cyclization to form 1-pyrroline-5-carboxylate. This is Gamma-glutamyl phosphate reductase from Oenococcus oeni (strain ATCC BAA-331 / PSU-1).